The primary structure comprises 537 residues: Tyrosine-protein kinase Fyn (537 aa).

Residue G2 is the site of N-myristoyl glycine attachment. Residues C3 and C6 are each lipidated (S-palmitoyl cysteine). Phosphothreonine; by PKC is present on T12. Phosphoserine is present on residues S21 and S26. Residues 82 to 143 enclose the SH3 domain; that stretch reads TGVTLFVALY…PSNYVAPVDS (62 aa). Residues 149–246 enclose the SH2 domain; sequence WYFGKLGRKD…GLCCRLVVPC (98 aa). The residue at position 185 (Y185) is a Phosphotyrosine. In terms of domain architecture, Protein kinase spans 271-524; the sequence is LQLIKRLGNG…YLQGFLEDYF (254 aa). ATP-binding positions include 277–285 and K299; that span reads LGNGQFGEV. Residue D390 is the Proton acceptor of the active site. Position 420 is a phosphotyrosine; by autocatalysis (Y420). At Y531 the chain carries Phosphotyrosine; by CSK.

This sequence belongs to the protein kinase superfamily. Tyr protein kinase family. SRC subfamily. Interacts (via its SH3 domain) with PIK3R1 and PRMT8. Interacts with FYB1, PAG1, and SH2D1A. Interacts with CD79A (tyrosine-phosphorylated form); the interaction increases FYN activity. Interacts (via SH2 domain) with CSF1R (tyrosine phosphorylated). Interacts with TOM1L1 (phosphorylated form). Interacts with KDR (tyrosine phosphorylated). Interacts (via SH3 domain) with KLHL2 (via N-terminus). Interacts with SH2D1A and SLAMF1. Interacts with ITCH; the interaction phosphorylates ITCH and negatively regulates its activity. Interacts with FASLG. Interacts with RUNX3. Interacts with KIT. Interacts with EPHA8; possible downstream effector of EPHA8 in regulation of cell adhesion. Interacts with PTK2/FAK1; this interaction leads to PTK2/FAK1 phosphorylation and activation. Interacts with CAV1; this interaction couples integrins to the Ras-ERK pathway. Interacts with UNC119. Interacts (via SH2 domain) with PTPRH (phosphorylated form). Interacts with PTPRO (phosphorylated form). Interacts with PTPRB (phosphorylated form). Interacts with FYB2. Interacts with DSCAM. Interacts with SKAP1 and FYB1; this interaction promotes the phosphorylation of CLNK. Interacts with NEDD9; in the presence of PTK2. It depends on Mn(2+) as a cofactor. Post-translationally, autophosphorylated at Tyr-420. Phosphorylation on the C-terminal tail at Tyr-531 by CSK maintains the enzyme in an inactive state. PTPRC/CD45 dephosphorylates Tyr-531 leading to activation. Ultraviolet B (UVB) strongly increase phosphorylation at Thr-12 and kinase activity, and promotes translocation from the cytoplasm to the nucleus. Dephosphorylation at Tyr-420 by PTPN2 negatively regulates T-cell receptor signaling. Phosphorylated at tyrosine residues, which can be enhanced by NTN1. Palmitoylated. Palmitoylation at Cys-3 and Cys-6, probably by ZDHHC21, regulates subcellular location.

Its subcellular location is the cytoplasm. It localises to the nucleus. The protein localises to the cell membrane. The protein resides in the perikaryon. The enzyme catalyses L-tyrosyl-[protein] + ATP = O-phospho-L-tyrosyl-[protein] + ADP + H(+). Inhibited by phosphorylation of Tyr-531 by leukocyte common antigen and activated by dephosphorylation of this site. Its function is as follows. Non-receptor tyrosine-protein kinase that plays a role in many biological processes including regulation of cell growth and survival, cell adhesion, integrin-mediated signaling, cytoskeletal remodeling, cell motility, immune response and axon guidance. Inactive FYN is phosphorylated on its C-terminal tail within the catalytic domain. Following activation by PKA, the protein subsequently associates with PTK2/FAK1, allowing PTK2/FAK1 phosphorylation, activation and targeting to focal adhesions. Involved in the regulation of cell adhesion and motility through phosphorylation of CTNNB1 (beta-catenin) and CTNND1 (delta-catenin). Regulates cytoskeletal remodeling by phosphorylating several proteins including the actin regulator WAS and the microtubule-associated proteins MAP2 and MAPT. Promotes cell survival by phosphorylating AGAP2/PIKE-A and preventing its apoptotic cleavage. Participates in signal transduction pathways that regulate the integrity of the glomerular slit diaphragm (an essential part of the glomerular filter of the kidney) by phosphorylating several slit diaphragm components including NPHS1, KIRREL1 and TRPC6. Plays a role in neural processes by phosphorylating DPYSL2, a multifunctional adapter protein within the central nervous system, ARHGAP32, a regulator for Rho family GTPases implicated in various neural functions, and SNCA, a small pre-synaptic protein. Involved in reelin signaling by mediating phosphorylation of DAB1 following reelin (RELN)-binding to its receptor. Participates in the downstream signaling pathways that lead to T-cell differentiation and proliferation following T-cell receptor (TCR) stimulation. Phosphorylates PTK2B/PYK2 in response to T-cell receptor activation. Also participates in negative feedback regulation of TCR signaling through phosphorylation of PAG1, thereby promoting interaction between PAG1 and CSK and recruitment of CSK to lipid rafts. CSK maintains LCK and FYN in an inactive form. Promotes CD28-induced phosphorylation of VAV1. In mast cells, phosphorylates CLNK after activation of immunoglobulin epsilon receptor signaling. Can also promote CD244-mediated NK cell activation. This is Tyrosine-protein kinase Fyn from Sus scrofa (Pig).